A 200-amino-acid polypeptide reads, in one-letter code: Mediator of RNA polymerase II transcription subunit 22 (200 aa).

Positions 93–122 (SVNEAIDQRNQQLRALQEECDRKLITLRDE) form a coiled coil. The tract at residues 169–200 (PLLASPETGAGPLQSAAPVHSHGGGPGPTEHT) is disordered. Residues 190 to 200 (HGGGPGPTEHT) are compositionally biased toward gly residues.

Belongs to the Mediator complex subunit 22 family. Component of the Mediator complex, which is composed of MED1, MED4, MED6, MED7, MED8, MED9, MED10, MED11, MED12, MED13, MED13L, MED14, MED15, MED16, MED17, MED18, MED19, MED20, MED21, MED22, MED23, MED24, MED25, MED26, MED27, MED29, MED30, MED31, CCNC, CDK8 and CDC2L6/CDK11. The MED12, MED13, CCNC and CDK8 subunits form a distinct module termed the CDK8 module. Mediator containing the CDK8 module is less active than Mediator lacking this module in supporting transcriptional activation. Individual preparations of the Mediator complex lacking one or more distinct subunits have been variously termed ARC, CRSP, DRIP, PC2, SMCC and TRAP.

It localises to the nucleus. In terms of biological role, component of the Mediator complex, a coactivator involved in the regulated transcription of nearly all RNA polymerase II-dependent genes. Mediator functions as a bridge to convey information from gene-specific regulatory proteins to the basal RNA polymerase II transcription machinery. Mediator is recruited to promoters by direct interactions with regulatory proteins and serves as a scaffold for the assembly of a functional preinitiation complex with RNA polymerase II and the general transcription factors. This chain is Mediator of RNA polymerase II transcription subunit 22 (Med22), found in Mus musculus (Mouse).